The chain runs to 470 residues: MNPNQKIITIGSICMTIGTISLILQIGNIISIWISHSIQTGSQNHTGICNQRIITYENNTWVNQTYVNISNTNVVAGKDTTSMILAGNSSLCPIRGWAIYSKDNSIRIGSKGDVFVIREPFISCSHLECRTFFLTQGALLNDKHSNGTVKDRSPYRALMSCPIGEAPSPYNSRFESVAWSASACHDGMGWLTIGISGPDDGAVAVLKYNGIITEIIKSWRKQILRTQESECVCVNGSCFTIMTDGPSDGPASYRIFKIEKGKITKSIELDAPNSHYEECSCYPDTGKVMCVCRDNWHGSNRPWVSFNQNLDYQIGYICSGVFGDNPRPKDGKGSCDPVNVDGADGVKGFSYRYGDGVWIGRTKSNSSRKGFEMIWDPNGWTDTDDNFLVKQDVVAMTDWSGYSGSFVQHPELTGLDCMRPCFWVELIRGRPREKTTIWTSGSSISFCGVNSDTVNWSWPDGAELPFTIDM.

Over 1 to 6 (MNPNQK) the chain is Intravirion. Residues 7–27 (IITIGSICMTIGTISLILQIG) traverse the membrane as a helical segment. The involved in apical transport and lipid raft association stretch occupies residues 11–33 (GSICMTIGTISLILQIGNIISIW). Over 28-470 (NIISIWISHS…GAELPFTIDM (443 aa)) the chain is Virion surface. The interval 36–90 (HSIQTGSQNHTGICNQRIITYENNTWVNQTYVNISNTNVVAGKDTTSMILAGNSS) is hypervariable stalk region. N-linked (GlcNAc...) asparagine; by host glycans are attached at residues Asn44, Asn58, Asn63, Asn68, and Asn88. Residues 91–470 (LCPIRGWAIY…GAELPFTIDM (380 aa)) form a head of neuraminidase region. Intrachain disulfides connect Cys92–Cys417, Cys124–Cys129, Cys184–Cys231, Cys233–Cys238, Cys279–Cys292, Cys281–Cys290, Cys318–Cys335, and Cys421–Cys447. Arg118 is a binding site for substrate. N-linked (GlcNAc...) asparagine; by host glycosylation is present at Asn146. Asp151 functions as the Proton donor/acceptor in the catalytic mechanism. Position 152 (Arg152) interacts with substrate. The N-linked (GlcNAc...) asparagine; by host glycan is linked to Asn235. 277–278 (EE) is a binding site for substrate. Arg293 serves as a coordination point for substrate. Residues Asp294, Gly298, and Asp324 each coordinate Ca(2+). N-linked (GlcNAc...) asparagine; by host glycosylation occurs at Asn365. Arg368 is a substrate binding site. Catalysis depends on Tyr402, which acts as the Nucleophile. N-linked (GlcNAc...) asparagine; by host glycosylation is present at Asn455.

Belongs to the glycosyl hydrolase 34 family. Homotetramer. It depends on Ca(2+) as a cofactor. In terms of processing, N-glycosylated.

Its subcellular location is the virion membrane. It localises to the host apical cell membrane. The enzyme catalyses Hydrolysis of alpha-(2-&gt;3)-, alpha-(2-&gt;6)-, alpha-(2-&gt;8)- glycosidic linkages of terminal sialic acid residues in oligosaccharides, glycoproteins, glycolipids, colominic acid and synthetic substrates.. With respect to regulation, inhibited by the neuraminidase inhibitors zanamivir (Relenza) and oseltamivir (Tamiflu). These drugs interfere with the release of progeny virus from infected cells and are effective against all influenza strains. Resistance to neuraminidase inhibitors is quite rare. In terms of biological role, catalyzes the removal of terminal sialic acid residues from viral and cellular glycoconjugates. Cleaves off the terminal sialic acids on the glycosylated HA during virus budding to facilitate virus release. Additionally helps virus spread through the circulation by further removing sialic acids from the cell surface. These cleavages prevent self-aggregation and ensure the efficient spread of the progeny virus from cell to cell. Otherwise, infection would be limited to one round of replication. Described as a receptor-destroying enzyme because it cleaves a terminal sialic acid from the cellular receptors. May facilitate viral invasion of the upper airways by cleaving the sialic acid moieties on the mucin of the airway epithelial cells. Likely to plays a role in the budding process through its association with lipid rafts during intracellular transport. May additionally display a raft-association independent effect on budding. Plays a role in the determination of host range restriction on replication and virulence. Sialidase activity in late endosome/lysosome traffic seems to enhance virus replication. The protein is Neuraminidase of Influenza A virus (strain A/Malaysia:Malaya/302/1954 H1N1).